A 158-amino-acid chain; its full sequence is Ribosome maturation factor RimP (158 aa).

This sequence belongs to the RimP family.

Its subcellular location is the cytoplasm. Functionally, required for maturation of 30S ribosomal subunits. In Lactobacillus helveticus (strain DPC 4571), this protein is Ribosome maturation factor RimP.